Reading from the N-terminus, the 49-residue chain is MRVHITLECTECHERNYLSSKNRRNNPDRVEFKKYCPRDRKVTLHRETK.

This sequence belongs to the bacterial ribosomal protein bL33 family.

This is Large ribosomal subunit protein bL33B from Levilactobacillus brevis (strain ATCC 367 / BCRC 12310 / CIP 105137 / JCM 1170 / LMG 11437 / NCIMB 947 / NCTC 947) (Lactobacillus brevis).